The following is a 77-amino-acid chain: Conotoxin ArMKLT2-0122 (77 aa).

The first 22 residues, 1-22, serve as a signal peptide directing secretion; it reads MKLTCVLIVAVLFLTACQLIAA. Positions 23 to 44 are excised as a propeptide; the sequence is DDSRDLKRFSRRKMRDGMLNTK. 3 cysteine pairs are disulfide-bonded: cysteine 50–cysteine 65, cysteine 57–cysteine 68, and cysteine 64–cysteine 73.

Belongs to the conotoxin O1 superfamily. In terms of tissue distribution, expressed by the venom duct.

The protein resides in the secreted. The chain is Conotoxin ArMKLT2-0122 from Conus arenatus (Sand-dusted cone).